A 500-amino-acid chain; its full sequence is FAD-linked oxidoreductase srdI (500 aa).

An N-terminal signal peptide occupies residues 1–20 (MHLSSSLLFTSALLAGGINA). Asn47 is a glycosylation site (N-linked (GlcNAc...) asparagine). The region spanning 69–241 (YRPPSYQAAI…TQATYKMHKS (173 aa)) is the FAD-binding PCMH-type domain. N-linked (GlcNAc...) asparagine glycosylation is found at Asn257 and Asn282.

It belongs to the oxygen-dependent FAD-linked oxidoreductase family. The cofactor is FAD.

In terms of biological role, FAD-linked oxidoreductase; part of the gene cluster that mediates the biosynthesis of sordarial, a salicylic aldehyde structurally related to the phytotoxin pyriculol. The most interesting aspect of this pathway is formation of an aromatic product from the highly reducing polyketide synthase srdA. SrdA synthesizes a reduced polyketide chain from one molecule of acetyl-CoA and five molecules of malonyl-CoA. The polyketide chain is then reductively released as an aldehyde. The oxidoreductases srdC, srdD and srdE then oxidize one of the hydroxy groups to facilitate the intramolecular aldol condensation, followed by dehydration to yield a salicylic aldehyde. This aldehyde can undergo facile reduction by endogenous reductases to yield the alcohol 1-hydroxy-2-hydroxymethyl-3-pent-1,3-dienylbenzene. The flavin-dependent srdI counteract against the propensity of the aldehydes to be reduced under physiological conditions and is responsible for reoxidizing 1-hydroxy-2-hydroxymethyl-3-pent-1,3-dienylbenzene back to the salicylic aldehyde. This salicylic aldehyde is then selectively epoxidized by the cupin-domain-containing oxidoreductase srdB to yield the epoxide, which can be hydrolyzed stereoselectively by the hydrolase srdG to give the final product sordarial. The protein is FAD-linked oxidoreductase srdI of Neurospora crassa (strain ATCC 24698 / 74-OR23-1A / CBS 708.71 / DSM 1257 / FGSC 987).